A 341-amino-acid polypeptide reads, in one-letter code: NADH-ubiquinone oxidoreductase chain 2 (341 aa).

A run of 8 helical transmembrane segments spans residues 8–28, 61–81, 95–117, 145–165, 195–215, 238–258, 266–286, and 320–340; these read IFFI…SWLG, FLTQ…MMMF, LLIL…FPGV, LNIN…ALGG, LLWL…ILMF, FFMF…GFLP, LVEM…LITL, and ILTM…IYLI.

It belongs to the complex I subunit 2 family.

It localises to the mitochondrion inner membrane. It carries out the reaction a ubiquinone + NADH + 5 H(+)(in) = a ubiquinol + NAD(+) + 4 H(+)(out). Core subunit of the mitochondrial membrane respiratory chain NADH dehydrogenase (Complex I) that is believed to belong to the minimal assembly required for catalysis. Complex I functions in the transfer of electrons from NADH to the respiratory chain. The immediate electron acceptor for the enzyme is believed to be ubiquinone. In Aedes aegypti (Yellowfever mosquito), this protein is NADH-ubiquinone oxidoreductase chain 2.